Consider the following 145-residue polypeptide: Deoxyuridine 5'-triphosphate nucleotidohydrolase (145 aa).

Substrate-binding positions include 63 to 65, Gln-76, and 80 to 82; these read RSG and TVD.

It belongs to the dUTPase family. Requires Mg(2+) as cofactor.

It carries out the reaction dUTP + H2O = dUMP + diphosphate + H(+). It functions in the pathway pyrimidine metabolism; dUMP biosynthesis; dUMP from dCTP (dUTP route): step 2/2. In terms of biological role, this enzyme is involved in nucleotide metabolism: it produces dUMP, the immediate precursor of thymidine nucleotides and it decreases the intracellular concentration of dUTP so that uracil cannot be incorporated into DNA. The protein is Deoxyuridine 5'-triphosphate nucleotidohydrolase of Chlamydia trachomatis serovar L2 (strain ATCC VR-902B / DSM 19102 / 434/Bu).